The following is a 393-amino-acid chain: GDP-mannose:cellobiosyl-diphosphopolyprenol alpha-mannosyltransferase (393 aa).

Belongs to the glycosyltransferase group 1 family. Glycosyltransferase 4 subfamily.

It catalyses the reaction beta-D-Glc-(1-&gt;4)-alpha-D-Glc-di-trans,octa-cis-undecaprenyl diphosphate + GDP-alpha-D-mannose = alpha-D-Man-(1-&gt;3)-beta-D-Glc-(1-&gt;4)-alpha-D-Glc-1-di-trans,octa-cis-undecaprenyl diphosphate + GDP + H(+). Functionally, involved in the biosynthesis of the exopolysaccharide acetan, a water-soluble polysaccharide involved in production of bacterial cellulose (BC). The polypeptide is GDP-mannose:cellobiosyl-diphosphopolyprenol alpha-mannosyltransferase (aceC) (Komagataeibacter xylinus (Gluconacetobacter xylinus)).